The chain runs to 199 residues: NAD(P)H dehydrogenase (quinone) (199 aa).

A Flavodoxin-like domain is found at 4–190; it reads MLVLYYSAYG…DGARFQGRRV (187 aa). Residues 10–15 and 78–80 contribute to the FMN site; these read SAYGYM and TRY. Tyrosine 12 is an NAD(+) binding site. Tryptophan 98 is a binding site for substrate. Residues 113–119 and histidine 134 contribute to the FMN site; that span reads STATQHG. Residues 158–181 form a disordered region; the sequence is GAPYGMTTTADGDGSRQPSAQELD. Residues 163-177 show a composition bias toward polar residues; the sequence is MTTTADGDGSRQPSA.

This sequence belongs to the WrbA family. FMN serves as cofactor.

The enzyme catalyses a quinone + NADH + H(+) = a quinol + NAD(+). It catalyses the reaction a quinone + NADPH + H(+) = a quinol + NADP(+). The sequence is that of NAD(P)H dehydrogenase (quinone) from Brucella abortus (strain S19).